The chain runs to 411 residues: Cladofulvin cluster transcriptional coactivator claA (411 aa).

A compositionally biased stretch (polar residues) spans 1–27; the sequence is MSDSLAGNGMRQNLNRSSTSSNHTGHA. Residues 1 to 32 form a disordered region; it reads MSDSLAGNGMRQNLNRSSTSSNHTGHAQNGRA. In terms of domain architecture, HTH iclR-type spans 47–117; the sequence is LACQVQSLAC…DPGHIAHTAL (71 aa). Residues 77 to 96 constitute a DNA-binding region (H-T-H motif); the sequence is LHDVAELANVPASQLSRVVR.

The protein localises to the nucleus. Functionally, transcriptional coactivator; part of the gene cluster that mediates the biosynthesis of cladofulvin, a conidial pigment not required for virulence but that plays a role in fitness and resistance to environmental stresses including UV light and low-temperature stress. With claE, coregulates the production of cladofulvin. The sequence is that of Cladofulvin cluster transcriptional coactivator claA from Passalora fulva (Tomato leaf mold).